Consider the following 377-residue polypeptide: MSDSSHNLLYNKFELPESVKMSPVEGAVGGIDKVARFVADPLEKGMGHTLGSALRRALLIGLEAPAIVSFSMTGVLHEYMAVEGIIEDVTNIVLNLKGSLLKKYPLQDCEGGRCSQKLRATISIDASDLAAAGGQKEVTLGDLLQEGTFEAVNPEHVIFTVTRPMQLEVMLRVAFGRGYSPSERIVLEERGMNEIVLDAAFSPVVLVNYFVEDTRVGQDTDFDRLVLQVETDGRVAPKEAVAFATQILSKHFSVFEKMDEKRIVFEEAISVEKENKDDILHKLVLGINEIELSVRSTNCLSNANIETIGELVIMPEPRLLQFRNFGKKSLCEIKNKLKEMKLELGMDLSQFGVGLDNVKEKMKWYAEKIRLSKNTKG.

Residues 1–259 are alpha N-terminal domain (alpha-NTD); it reads MSDSSHNLLY…KHFSVFEKMD (259 aa). The tract at residues 276-377 is alpha C-terminal domain (alpha-CTD); sequence KDDILHKLVL…KIRLSKNTKG (102 aa).

This sequence belongs to the RNA polymerase alpha chain family. As to quaternary structure, homodimer. The RNAP catalytic core consists of 2 alpha, 1 beta, 1 beta' and 1 omega subunit. When a sigma factor is associated with the core the holoenzyme is formed, which can initiate transcription.

It carries out the reaction RNA(n) + a ribonucleoside 5'-triphosphate = RNA(n+1) + diphosphate. Functionally, DNA-dependent RNA polymerase catalyzes the transcription of DNA into RNA using the four ribonucleoside triphosphates as substrates. The chain is DNA-directed RNA polymerase subunit alpha from Chlamydia trachomatis serovar A (strain ATCC VR-571B / DSM 19440 / HAR-13).